The sequence spans 76 residues: cAMP-dependent protein kinase inhibitor alpha (76 aa).

Threonine 2 carries the blocked amino end (Thr) modification. The tract at residues 49-76 (KAEGEGDAQRNPSEQTGEAQGEAAKQES) is disordered.

This sequence belongs to the PKI family.

Extremely potent competitive inhibitor of cAMP-dependent protein kinase activity, this protein interacts with the catalytic subunit of the enzyme after the cAMP-induced dissociation of its regulatory chains. The protein is cAMP-dependent protein kinase inhibitor alpha (PKIA) of Gallus gallus (Chicken).